The following is a 1349-amino-acid chain: ABC multidrug transporter mdr1 (1349 aa).

Residues 1-62 (MPAPETGASS…PDGKQKDHGK (62 aa)) form a disordered region. Residues 35–45 (DNEKPHDHHSL) are compositionally biased toward basic and acidic residues. 4 consecutive transmembrane segments (helical) span residues 108 to 128 (ILII…LPLF), 162 to 182 (YFVY…VGFI), 234 to 254 (KVGL…VAYV), and 257 to 277 (WKLA…MGGG). An ABC transmembrane type-1 1 domain is found at 112–402 (LVSAICAIAA…VAPNGQAFTN (291 aa)). N-linked (GlcNAc...) asparagine glycosylation occurs at N308. The next 2 membrane-spanning stretches (helical) occupy residues 339–359 (ILGM…GLGF) and 371–391 (VNVG…FSLG). An ABC transporter 1 domain is found at 437-682 (IEFRNVKHIY…KGTYYKLVEA (246 aa)). 472–479 (GPSGSGKS) is an ATP binding site. 2 helical membrane-spanning segments follow: residues 779–799 (MLIG…QAFL) and 828–848 (FFVV…AFAI). Residues 780–1069 (LIGLTFSFLA…VFSFAPDMGK (290 aa)) enclose the ABC transmembrane type-1 2 domain. 2 N-linked (GlcNAc...) asparagine glycosylation sites follow: N878 and N893. 4 helical membrane-spanning segments follow: residues 896-916 (GVSG…GAAM), 926-948 (LALV…FYML), 1016-1036 (ALVF…LGHH), and 1043-1063 (FFVC…VFSF). The 239-residue stretch at 1104 to 1342 (IEFRDVHFRY…KGRYYELVNL (239 aa)) folds into the ABC transporter 2 domain. Residue N1126 is glycosylated (N-linked (GlcNAc...) asparagine). 1139 to 1146 (GPSGCGKS) provides a ligand contact to ATP.

Belongs to the ABC transporter superfamily. ABCB family. Multidrug resistance exporter (TC 3.A.1.201) subfamily.

The protein localises to the cell membrane. The catalysed reaction is voriconazole(in) + ATP + H2O = voriconazole(out) + ADP + phosphate + H(+). In terms of biological role, pleiotropic ABC efflux transporter that may be involved in A.fumigatus adaptation to azoles such as vorizonazole. This chain is ABC multidrug transporter mdr1, found in Aspergillus fumigatus (strain ATCC MYA-4609 / CBS 101355 / FGSC A1100 / Af293) (Neosartorya fumigata).